Here is a 488-residue protein sequence, read N- to C-terminus: 3-octaprenyl-4-hydroxybenzoate carboxy-lyase (488 aa).

Asn172 provides a ligand contact to Mn(2+). Prenylated FMN is bound by residues 175-177, 189-191, and 194-195; these read IYR, RWL, and RG. Residue Glu238 coordinates Mn(2+). Asp287 acts as the Proton donor in catalysis.

This sequence belongs to the UbiD family. Homohexamer. The cofactor is prenylated FMN. Requires Mn(2+) as cofactor.

It is found in the cell membrane. The catalysed reaction is a 4-hydroxy-3-(all-trans-polyprenyl)benzoate + H(+) = a 2-(all-trans-polyprenyl)phenol + CO2. The protein operates within cofactor biosynthesis; ubiquinone biosynthesis. Catalyzes the decarboxylation of 3-octaprenyl-4-hydroxy benzoate to 2-octaprenylphenol, an intermediate step in ubiquinone biosynthesis. This chain is 3-octaprenyl-4-hydroxybenzoate carboxy-lyase, found in Shewanella oneidensis (strain ATCC 700550 / JCM 31522 / CIP 106686 / LMG 19005 / NCIMB 14063 / MR-1).